Reading from the N-terminus, the 146-residue chain is Cyanate hydratase (146 aa).

Active-site residues include Arg-87, Glu-90, and Ser-113.

This sequence belongs to the cyanase family.

It carries out the reaction cyanate + hydrogencarbonate + 3 H(+) = NH4(+) + 2 CO2. Its function is as follows. Catalyzes the reaction of cyanate with bicarbonate to produce ammonia and carbon dioxide. The protein is Cyanate hydratase of Pseudomonas putida (strain ATCC 700007 / DSM 6899 / JCM 31910 / BCRC 17059 / LMG 24140 / F1).